The primary structure comprises 145 residues: Large ribosomal subunit protein bL17 (145 aa).

The protein belongs to the bacterial ribosomal protein bL17 family. As to quaternary structure, part of the 50S ribosomal subunit. Contacts protein L32.

The protein is Large ribosomal subunit protein bL17 of Orientia tsutsugamushi (strain Ikeda) (Rickettsia tsutsugamushi).